The following is a 78-amino-acid chain: Defensin-like protein 308 (78 aa).

A signal peptide spans 1 to 19 (MKTSAFFIAVLLILSCSSS). Disulfide bonds link Cys31–Cys50, Cys37–Cys55, and Cys41–Cys57.

This sequence belongs to the DEFL family.

It is found in the secreted. This Arabidopsis thaliana (Mouse-ear cress) protein is Defensin-like protein 308.